We begin with the raw amino-acid sequence, 807 residues long: Glycerol-3-phosphate acyltransferase (807 aa).

Residues 308–313 (CHRSHM) carry the HXXXXD motif motif.

Belongs to the GPAT/DAPAT family.

It is found in the cell inner membrane. The enzyme catalyses sn-glycerol 3-phosphate + an acyl-CoA = a 1-acyl-sn-glycero-3-phosphate + CoA. It functions in the pathway phospholipid metabolism; CDP-diacylglycerol biosynthesis; CDP-diacylglycerol from sn-glycerol 3-phosphate: step 1/3. The protein is Glycerol-3-phosphate acyltransferase of Shewanella loihica (strain ATCC BAA-1088 / PV-4).